The primary structure comprises 200 residues: Charged multivesicular body protein 6-A (200 aa).

A lipid anchor (N-myristoyl glycine) is attached at G2. Residues 9–102 adopt a coiled-coil conformation; sequence RRSRVTEQDK…FAQIEMKVIE (94 aa). The segment at 166–200 is disordered; the sequence is EDLELPEAPSEPLPDTIPEKQAVKNKPKPQMIAAS. The Type-2 MIT-interacting motif signature appears at 168–179; it reads LELPEAPSEPLP.

It belongs to the SNF7 family. Probable core component of the endosomal sorting required for transport complex III (ESCRT-III). ESCRT-III components are thought to multimerize to form a flat lattice on the perimeter membrane of the endosome.

The protein localises to the endomembrane system. It is found in the late endosome membrane. Its function is as follows. Probable core component of the endosomal sorting required for transport complex III (ESCRT-III) which is involved in multivesicular bodies (MVBs) formation and sorting of endosomal cargo proteins into MVBs. MVBs contain intraluminal vesicles (ILVs) that are generated by invagination and scission from the limiting membrane of the endosome and mostly are delivered to lysosomes enabling degradation of membrane proteins, such as stimulated growth factor receptors, lysosomal enzymes and lipids. In the ESCRT-III complex, it probably serves as an acceptor for the ESCRT-II complex on endosomal membranes. This Xenopus laevis (African clawed frog) protein is Charged multivesicular body protein 6-A (chmp6-a).